The primary structure comprises 454 residues: Gustatory and odorant receptor 21a (454 aa).

Residues 1 to 114 are Cytoplasmic-facing; sequence MTFLDRTMSF…LPRTGYSWGS (114 aa). Residues 115-135 traverse the membrane as a helical segment; that stretch reads KQVMWAIFIYSCQTTIVVLVL. Residues 136-153 are Extracellular-facing; the sequence is RERVKKFVTSPDKRFDEA. The chain crosses the membrane as a helical span at residues 154-174; that stretch reads IYNVIFISLLFTNFLLPVASW. The Cytoplasmic segment spans residues 175-206; that stretch reads RHGPQVAIFKNMWTNYQYKFFKTTGSPIVFPN. A helical membrane pass occupies residues 207–227; it reads LYPLTWSLCVFSWLLSIAINL. Residues 228–237 lie on the Extracellular side of the membrane; the sequence is SQYFLQPDFR. The chain crosses the membrane as a helical span at residues 238–258; that stretch reads LWYTFAYYPIIAMLNCFCSLW. Over 259–312 the chain is Cytoplasmic; it reads YINCNAFGTASRALSDALQTTIRGEKPAQKLTEYRHLWVDLSHMMQQLGRAYSN. A helical membrane pass occupies residues 313–333; that stretch reads MYGMYCLVIFFTTIIATYGSI. Residues 334–345 are Extracellular-facing; the sequence is SEIIDHGATYKE. Residues 346–366 traverse the membrane as a helical segment; sequence VGLFVIVFYCMGLLYIICNEA. Residues 367–422 lie on the Cytoplasmic side of the membrane; that stretch reads HYASRKVGLDFQTKLLNINLTAVDAATQKEVEMLLVAINKNPPIMNLDGYANINRE. A helical transmembrane segment spans residues 423–443; that stretch reads LITTNISFMATYLVVLLQFKI. Over 444–454 the chain is Extracellular; that stretch reads TEQRRIGQQQA.

It belongs to the insect chemoreceptor superfamily. Gustatory receptor (GR) family. Gr21a subfamily. As to quaternary structure, gr21a and Gr63a probably form a heterodimer that responds to CO(2). In terms of tissue distribution, expressed in the adult labellar chemosensory neurons. Carbon dioxide-responsive neurons coexpress Gr21a and Gr63a in a pair of chemosensory receptors at both larval and adult life stages. A single bilateral neuron, expressing the Gr21a receptor, is responsible for CO(2) detection in larvae.

The protein resides in the cell membrane. Functionally, gustatory and odorant receptor which mediates acceptance or avoidance behavior, depending on its substrates. Gr21a and Gr63a together are sufficient for carbon dioxide detection and avoidance behavior. It is possible that the CO(2) receptors Gr63a and Gr21a activate the TRPC channels through Galpha49B and Plc21C. This innate olfactory avoidance behavior can be inhibited by inhibitory interactions of the odors such as 1-hexanol and 2,3-butanedione with Gr21a and Gr63a. The sequence is that of Gustatory and odorant receptor 21a (Gr21a) from Drosophila melanogaster (Fruit fly).